A 166-amino-acid chain; its full sequence is Protein-export protein SecB (166 aa).

Belongs to the SecB family. In terms of assembly, homotetramer, a dimer of dimers. One homotetramer interacts with 1 SecA dimer.

Its subcellular location is the cytoplasm. Its function is as follows. One of the proteins required for the normal export of preproteins out of the cell cytoplasm. It is a molecular chaperone that binds to a subset of precursor proteins, maintaining them in a translocation-competent state. It also specifically binds to its receptor SecA. The chain is Protein-export protein SecB from Acidiphilium cryptum (strain JF-5).